The primary structure comprises 121 residues: Large ribosomal subunit protein uL14 (121 aa).

The protein belongs to the universal ribosomal protein uL14 family. Part of the 50S ribosomal subunit. Forms a cluster with proteins L3 and L19. In the 70S ribosome, L14 and L19 interact and together make contacts with the 16S rRNA in bridges B5 and B8.

Functionally, binds to 23S rRNA. Forms part of two intersubunit bridges in the 70S ribosome. This Aquifex aeolicus (strain VF5) protein is Large ribosomal subunit protein uL14.